The sequence spans 604 residues: Aspartate--tRNA(Asp/Asn) ligase (604 aa).

Glutamate 168 is a binding site for L-aspartate. The aspartate stretch occupies residues 192–195; sequence QLFK. Arginine 214 serves as a coordination point for L-aspartate. Residues 214-216 and glutamine 223 contribute to the ATP site; that span reads RDE. L-aspartate is bound at residue histidine 446. Position 480 (glutamate 480) interacts with ATP. L-aspartate is bound at residue arginine 487. Residue 532–535 coordinates ATP; sequence GWDR. The tract at residues 575 to 604 is disordered; sequence LEAGVDARPKPEARAQAGTAGPAAPVADPT. Over residues 577–587 the composition is skewed to basic and acidic residues; the sequence is AGVDARPKPEA. Positions 588-604 are enriched in low complexity; the sequence is RAQAGTAGPAAPVADPT.

Belongs to the class-II aminoacyl-tRNA synthetase family. Type 1 subfamily. As to quaternary structure, homodimer.

It is found in the cytoplasm. The enzyme catalyses tRNA(Asx) + L-aspartate + ATP = L-aspartyl-tRNA(Asx) + AMP + diphosphate. In terms of biological role, aspartyl-tRNA synthetase with relaxed tRNA specificity since it is able to aspartylate not only its cognate tRNA(Asp) but also tRNA(Asn). Reaction proceeds in two steps: L-aspartate is first activated by ATP to form Asp-AMP and then transferred to the acceptor end of tRNA(Asp/Asn). The chain is Aspartate--tRNA(Asp/Asn) ligase from Salinispora arenicola (strain CNS-205).